Consider the following 80-residue polypeptide: uncharacterized protein (80 aa).

Residues 10–29 (FVAREYPLVVVPFIYFVLFL) traverse the membrane as a helical segment.

The protein resides in the membrane. This is an uncharacterized protein from Saccharomyces cerevisiae (strain ATCC 204508 / S288c) (Baker's yeast).